Reading from the N-terminus, the 261-residue chain is MWFLILFLALSLGGIDAAPPLQSRVVGGFNCKKNSQPWQVAVYYQKEHICGGVLLDRNWVLTAAHCYVDQYEVWLGKNKLFQEEPSAQHRLVSKSFPHPGFNMSLLMLQTIPPGADFSNDLMLLRLSKPADITDVVKPIALPTKEPKPGSKCLASGWGSITPTRWQKPDDLQCVFITLLPNENCAKVYLQKVTDVMLCAGEMGGGKDTCRDDSGGPLICDGILQGTTSYGPVPCGKPGVPAIYTNLIKFNSWIKDTMMKNA.

Positions 1 to 16 are cleaved as a signal peptide; that stretch reads MWFLILFLALSLGGID. The propeptide at 17-24 is activation peptide; that stretch reads AAPPLQSR. The region spanning 25 to 258 is the Peptidase S1 domain; it reads VVGGFNCKKN…FNSWIKDTMM (234 aa). 5 cysteine pairs are disulfide-bonded: cysteine 31–cysteine 173, cysteine 50–cysteine 66, cysteine 152–cysteine 219, cysteine 184–cysteine 198, and cysteine 209–cysteine 234. Histidine 65 serves as the catalytic Charge relay system. A glycan (N-linked (GlcNAc...) asparagine) is linked at asparagine 102. Aspartate 120 serves as the catalytic Charge relay system. The active-site Charge relay system is the serine 213.

This sequence belongs to the peptidase S1 family. Kallikrein subfamily.

It catalyses the reaction Hydrolyzes mouse Ren2 protein (a species of prorenin present in the submandibular gland) on the carboxy side of the arginine residue at the Lys-Arg-|- pair in the N-terminus, to yield mature renin.. In terms of biological role, cleaves REN2 at a dibasic site to yield mature renin. This is Epidermal growth factor-binding protein type B (Egfbp2) from Mus musculus (Mouse).